The primary structure comprises 148 residues: uncharacterized protein (148 aa).

This is an uncharacterized protein from Acanthamoeba polyphaga mimivirus (APMV).